The chain runs to 66 residues: UPF0337 protein SpyM3_0896 (66 aa).

It belongs to the UPF0337 (CsbD) family.

In Streptococcus pyogenes serotype M3 (strain ATCC BAA-595 / MGAS315), this protein is UPF0337 protein SpyM3_0896.